Consider the following 1235-residue polypeptide: ATP-dependent helicase/nuclease subunit A (1235 aa).

The UvrD-like helicase ATP-binding domain occupies 4-470 (REYTLSQKQA…IILAENFRSM (467 aa)). ATP is bound at residue 25 to 32 (ASAGSGKT). The UvrD-like helicase C-terminal domain maps to 501–795 (QFGAKYYPDE…KLMTIHGSKG (295 aa)).

Belongs to the helicase family. AddA subfamily. Heterodimer of AddA and AddB/RexB. Mg(2+) is required as a cofactor.

The enzyme catalyses Couples ATP hydrolysis with the unwinding of duplex DNA by translocating in the 3'-5' direction.. It catalyses the reaction ATP + H2O = ADP + phosphate + H(+). Its function is as follows. The heterodimer acts as both an ATP-dependent DNA helicase and an ATP-dependent, dual-direction single-stranded exonuclease. Recognizes the chi site generating a DNA molecule suitable for the initiation of homologous recombination. The AddA nuclease domain is required for chi fragment generation; this subunit has the helicase and 3' -&gt; 5' nuclease activities. In Pediococcus pentosaceus (strain ATCC 25745 / CCUG 21536 / LMG 10740 / 183-1w), this protein is ATP-dependent helicase/nuclease subunit A.